The chain runs to 118 residues: Large ribosomal subunit protein bL19 (118 aa).

The protein belongs to the bacterial ribosomal protein bL19 family.

In terms of biological role, this protein is located at the 30S-50S ribosomal subunit interface and may play a role in the structure and function of the aminoacyl-tRNA binding site. The sequence is that of Large ribosomal subunit protein bL19 from Campylobacter jejuni subsp. jejuni serotype O:2 (strain ATCC 700819 / NCTC 11168).